Consider the following 317-residue polypeptide: Transaldolase (317 aa).

K126 serves as the catalytic Schiff-base intermediate with substrate.

The protein belongs to the transaldolase family. Type 1 subfamily. Homodimer.

Its subcellular location is the cytoplasm. The enzyme catalyses D-sedoheptulose 7-phosphate + D-glyceraldehyde 3-phosphate = D-erythrose 4-phosphate + beta-D-fructose 6-phosphate. It participates in carbohydrate degradation; pentose phosphate pathway; D-glyceraldehyde 3-phosphate and beta-D-fructose 6-phosphate from D-ribose 5-phosphate and D-xylulose 5-phosphate (non-oxidative stage): step 2/3. In terms of biological role, transaldolase is important for the balance of metabolites in the pentose-phosphate pathway. This chain is Transaldolase, found in Burkholderia ambifaria (strain MC40-6).